A 448-amino-acid polypeptide reads, in one-letter code: Probable tryptophanase (448 aa).

Lys-253 carries the post-translational modification N6-(pyridoxal phosphate)lysine.

This sequence belongs to the beta-eliminating lyase family. Requires pyridoxal 5'-phosphate as cofactor.

The catalysed reaction is L-tryptophan + H2O = indole + pyruvate + NH4(+). It functions in the pathway amino-acid degradation; L-tryptophan degradation via pyruvate pathway; indole and pyruvate from L-tryptophan: step 1/1. The polypeptide is Probable tryptophanase (Halobacterium salinarum (strain ATCC 29341 / DSM 671 / R1)).